The chain runs to 370 residues: tRNA/tmRNA (uracil-C(5))-methyltransferase (370 aa).

Residues glutamine 195, tyrosine 221, asparagine 226, glutamate 242, and aspartate 302 each contribute to the S-adenosyl-L-methionine site. Cysteine 327 functions as the Nucleophile in the catalytic mechanism. Residue glutamate 361 is the Proton acceptor of the active site.

The protein belongs to the class I-like SAM-binding methyltransferase superfamily. RNA M5U methyltransferase family. TrmA subfamily.

It carries out the reaction uridine(54) in tRNA + S-adenosyl-L-methionine = 5-methyluridine(54) in tRNA + S-adenosyl-L-homocysteine + H(+). The enzyme catalyses uridine(341) in tmRNA + S-adenosyl-L-methionine = 5-methyluridine(341) in tmRNA + S-adenosyl-L-homocysteine + H(+). Dual-specificity methyltransferase that catalyzes the formation of 5-methyluridine at position 54 (m5U54) in all tRNAs, and that of position 341 (m5U341) in tmRNA (transfer-mRNA). This chain is tRNA/tmRNA (uracil-C(5))-methyltransferase, found in Wolinella succinogenes (strain ATCC 29543 / DSM 1740 / CCUG 13145 / JCM 31913 / LMG 7466 / NCTC 11488 / FDC 602W) (Vibrio succinogenes).